The sequence spans 140 residues: Nucleoside diphosphate kinase (140 aa).

ATP-binding residues include lysine 11, phenylalanine 59, arginine 87, threonine 93, arginine 104, and asparagine 114. Histidine 117 serves as the catalytic Pros-phosphohistidine intermediate.

The protein belongs to the NDK family. In terms of assembly, homotetramer. Requires Mg(2+) as cofactor.

It is found in the cytoplasm. The catalysed reaction is a 2'-deoxyribonucleoside 5'-diphosphate + ATP = a 2'-deoxyribonucleoside 5'-triphosphate + ADP. It carries out the reaction a ribonucleoside 5'-diphosphate + ATP = a ribonucleoside 5'-triphosphate + ADP. Its function is as follows. Major role in the synthesis of nucleoside triphosphates other than ATP. The ATP gamma phosphate is transferred to the NDP beta phosphate via a ping-pong mechanism, using a phosphorylated active-site intermediate. The sequence is that of Nucleoside diphosphate kinase from Sinorhizobium fredii (strain NBRC 101917 / NGR234).